We begin with the raw amino-acid sequence, 294 residues long: UDP-3-O-acyl-N-acetylglucosamine deacetylase (294 aa).

Zn(2+) contacts are provided by His-75, His-232, and Asp-236. His-259 acts as the Proton donor in catalysis.

The protein belongs to the LpxC family. Zn(2+) is required as a cofactor.

It carries out the reaction a UDP-3-O-[(3R)-3-hydroxyacyl]-N-acetyl-alpha-D-glucosamine + H2O = a UDP-3-O-[(3R)-3-hydroxyacyl]-alpha-D-glucosamine + acetate. The protein operates within glycolipid biosynthesis; lipid IV(A) biosynthesis; lipid IV(A) from (3R)-3-hydroxytetradecanoyl-[acyl-carrier-protein] and UDP-N-acetyl-alpha-D-glucosamine: step 2/6. In terms of biological role, catalyzes the hydrolysis of UDP-3-O-myristoyl-N-acetylglucosamine to form UDP-3-O-myristoylglucosamine and acetate, the committed step in lipid A biosynthesis. In Campylobacter hominis (strain ATCC BAA-381 / DSM 21671 / CCUG 45161 / LMG 19568 / NCTC 13146 / CH001A), this protein is UDP-3-O-acyl-N-acetylglucosamine deacetylase.